The primary structure comprises 381 residues: L-lactate dehydrogenase (381 aa).

The region spanning 1-380 is the FMN hydroxy acid dehydrogenase domain; it reads MIISASTDYR…SADSLVRELG (380 aa). Y24 lines the substrate pocket. FMN is bound by residues S106 and Q127. Y129 is a substrate binding site. Position 155 (T155) interacts with FMN. Substrate is bound at residue R164. K251 provides a ligand contact to FMN. H275 functions as the Proton acceptor in the catalytic mechanism. R278 lines the substrate pocket. 306–330 is an FMN binding site; sequence DSGIRTGLDVVRMIALGADSVLLGR.

The protein belongs to the FMN-dependent alpha-hydroxy acid dehydrogenase family. Homotetramer. The cofactor is FMN.

It is found in the cell inner membrane. The enzyme catalyses (S)-lactate + A = pyruvate + AH2. Functionally, catalyzes the conversion of L-lactate to pyruvate. Is coupled to the respiratory chain. The sequence is that of L-lactate dehydrogenase from Pseudomonas aeruginosa (strain LESB58).